The sequence spans 182 residues: Adenine phosphoribosyltransferase (182 aa).

It belongs to the purine/pyrimidine phosphoribosyltransferase family. In terms of assembly, homodimer.

Its subcellular location is the cytoplasm. It carries out the reaction AMP + diphosphate = 5-phospho-alpha-D-ribose 1-diphosphate + adenine. It participates in purine metabolism; AMP biosynthesis via salvage pathway; AMP from adenine: step 1/1. Catalyzes a salvage reaction resulting in the formation of AMP, that is energically less costly than de novo synthesis. This is Adenine phosphoribosyltransferase from Pseudomonas syringae pv. tomato (strain ATCC BAA-871 / DC3000).